The primary structure comprises 393 residues: NAD(P)H-quinone oxidoreductase subunit H, chloroplastic (393 aa).

The protein belongs to the complex I 49 kDa subunit family. In terms of assembly, NDH is composed of at least 16 different subunits, 5 of which are encoded in the nucleus.

The protein resides in the plastid. Its subcellular location is the chloroplast thylakoid membrane. The enzyme catalyses a plastoquinone + NADH + (n+1) H(+)(in) = a plastoquinol + NAD(+) + n H(+)(out). It catalyses the reaction a plastoquinone + NADPH + (n+1) H(+)(in) = a plastoquinol + NADP(+) + n H(+)(out). In terms of biological role, NDH shuttles electrons from NAD(P)H:plastoquinone, via FMN and iron-sulfur (Fe-S) centers, to quinones in the photosynthetic chain and possibly in a chloroplast respiratory chain. The immediate electron acceptor for the enzyme in this species is believed to be plastoquinone. Couples the redox reaction to proton translocation, and thus conserves the redox energy in a proton gradient. The sequence is that of NAD(P)H-quinone oxidoreductase subunit H, chloroplastic from Zygnema circumcarinatum (Green alga).